The chain runs to 218 residues: Probable transaldolase (218 aa).

The active-site Schiff-base intermediate with substrate is the Lys87.

It belongs to the transaldolase family. Type 3B subfamily.

Its subcellular location is the cytoplasm. It catalyses the reaction D-sedoheptulose 7-phosphate + D-glyceraldehyde 3-phosphate = D-erythrose 4-phosphate + beta-D-fructose 6-phosphate. It functions in the pathway carbohydrate degradation; pentose phosphate pathway; D-glyceraldehyde 3-phosphate and beta-D-fructose 6-phosphate from D-ribose 5-phosphate and D-xylulose 5-phosphate (non-oxidative stage): step 2/3. Transaldolase is important for the balance of metabolites in the pentose-phosphate pathway. The chain is Probable transaldolase from Bacteroides fragilis (strain ATCC 25285 / DSM 2151 / CCUG 4856 / JCM 11019 / LMG 10263 / NCTC 9343 / Onslow / VPI 2553 / EN-2).